The sequence spans 392 residues: Chaperone protein DnaJ (392 aa).

Positions 2-67 (DYYSILGISK…QKRDSYDRFG (66 aa)) constitute a J domain. The CR-type zinc-finger motif lies at 148–226 (GVEKELVVSG…CRGQGRVKDK (79 aa)). Cysteine 161, cysteine 164, cysteine 178, cysteine 181, cysteine 200, cysteine 203, cysteine 214, and cysteine 217 together coordinate Zn(2+). CXXCXGXG motif repeat units follow at residues 161–168 (CETCSGQG), 178–185 (CERCKGSG), 200–207 (CPECGGEG), and 214–221 (CSSCRGQG).

The protein belongs to the DnaJ family. In terms of assembly, homodimer. The cofactor is Zn(2+).

Its subcellular location is the cytoplasm. Participates actively in the response to hyperosmotic and heat shock by preventing the aggregation of stress-denatured proteins and by disaggregating proteins, also in an autonomous, DnaK-independent fashion. Unfolded proteins bind initially to DnaJ; upon interaction with the DnaJ-bound protein, DnaK hydrolyzes its bound ATP, resulting in the formation of a stable complex. GrpE releases ADP from DnaK; ATP binding to DnaK triggers the release of the substrate protein, thus completing the reaction cycle. Several rounds of ATP-dependent interactions between DnaJ, DnaK and GrpE are required for fully efficient folding. Also involved, together with DnaK and GrpE, in the DNA replication of plasmids through activation of initiation proteins. In Chlamydia pneumoniae (Chlamydophila pneumoniae), this protein is Chaperone protein DnaJ.